Reading from the N-terminus, the 442-residue chain is Galactose/N-acetylgalactosamine-binding lectin CEL-III (442 aa).

The propeptide at 1-10 (MVSLVPCGFA) is removed in mature form. A Pyrrolidone carboxylic acid modification is found at glutamine 11. The segment at 11-304 (QVLCTNPLDI…DWEVPTATWN (294 aa)) is has hemagglutinating activity towards rabbit erythrocytes, but no hemolytic activity towards them. Intrachain disulfides connect cysteine 14–cysteine 59, cysteine 31–cysteine 48, and cysteine 72–cysteine 88. D-galactose is bound by residues aspartate 19 and 33-36 (DIVG). 2 Ricin B-type lectin domains span residues 28-102 (SKQC…RWRL) and 115-245 (EQVA…WSRP). Residues aspartate 33, isoleucine 34, and glycine 36 each contribute to the Ca(2+) site. Residues asparagine 42 and isoleucine 43 each coordinate Mg(2+). D-galactose is bound at residue aspartate 49. Aspartate 53 lines the Ca(2+) pocket. Mg(2+)-binding residues include asparagine 82 and valine 83. D-galactose is bound by residues valine 117 and 131-134 (DVEG). Cysteines 129 and 146 form a disulfide. Ca(2+)-binding residues include aspartate 131, valine 132, and glycine 134. Isoleucine 141 contributes to the Mg(2+) binding site. Position 144-147 (144-147 (YDCQ)) interacts with D-galactose. Ca(2+)-binding residues include aspartate 151, aspartate 178, valine 179, and glycine 181. Cysteines 176 and 193 form a disulfide. Residue 178–181 (DVEG) coordinates D-galactose. Positions 187 and 188 each coordinate Mg(2+). 191-194 (YSCE) is a binding site for D-galactose. Aspartate 198, aspartate 219, valine 220, and glycine 222 together coordinate Ca(2+). A disulfide bridge links cysteine 217 with cysteine 234. Residue 219 to 222 (DVEG) participates in D-galactose binding. Asparagine 228 and valine 229 together coordinate Mg(2+). D-galactose is bound at residue 232 to 235 (YRCD). Residue aspartate 239 coordinates Ca(2+). Disulfide bonds link cysteine 249/cysteine 254 and cysteine 264/cysteine 281. The Ricin B-type lectin 3 domain maps to 261 to 293 (SNKCLDVSGDQGTGDVGTWQCDGLPDQRFKWVF). Residues aspartate 266, valine 267, and glycine 269 each contribute to the Ca(2+) site. 266-269 (DVSG) is a D-galactose binding site. Aspartate 275 and valine 276 together coordinate Mg(2+). D-galactose is bound by residues 279–282 (WQCD) and aspartate 286. A Ca(2+)-binding site is contributed by aspartate 286. Residues 294–442 (DDWEVPTATW…NEDCTFCTDI (149 aa)) are has a strong tendency to self-associate leading to formation of oligomers. 4 cysteine pairs are disulfide-bonded: cysteine 308–cysteine 390, cysteine 377–cysteine 416, cysteine 425–cysteine 439, and cysteine 431–cysteine 436.

As to quaternary structure, oligomerizes in the human and rabbit erythrocyte membranes. Oligomerization is induced by binding of beta-1,4-linked disaccharide ligands such as lactose, lactulose, N-acetyllactosamine and phenyl-beta-D-galactoside, but only a little by N-acetylgalactosamine and galactose, and not at all by melibiose in aqueous solution in the presence of high salt concentration and pH 10. Forms heptamers that assemble into larger 21mer oligomers, which may be inserted as a transmembrane pore to the erythrocyte membrane. It depends on Ca(2+) as a cofactor. Mg(2+) serves as cofactor. In terms of tissue distribution, expressed in body fluid (at protein level).

It is found in the secreted. Ca(2+) is required for hemolytic activity and the activity increases with increasing calcium concentration. Hemolytic activity is inhibited by N-acetylgalactosamine (GalNAc), lactose, lactulose, galactosamine, dextran with molecular masses greater than 4 kDa, to a lesser extent by inulin and only slightly by sucrose and melezitose, but not by glucose or mannose. The activity is abolished in the presence of 10 mM EDTA. Lactose-binding increases with increasing calcium concentration, but calcium has no effect on hemagglutinating activity. Cytotoxic effect on Madin-Darby canine kidney (MDCK) cell line is strongly inhibited by galactose, lactose and N-acetylgalactosamine (GalNAc), but not by raffinose, N-acetylglucosamine (GlcNAc), glucose, mannose, ribose or sucrose. Pore formation in artificial lactosyl ceramide (LacCer) or globotetraosylceramide (Gb4Cer) containing liposomes is strongly inhibited by lactose. In terms of biological role, galactose/N-acetylgalactosamine (Gal/GalNAc)-binding lectin with hemolytic activity. Favors saccharides that have a beta-1,4 linkage at the non-reducing end rather than saccharides having alpha-1,6 or alpha-1,4 linkages. Binds lactose, lactulose, GalNAc, galactosamine, methyl alpha-galactopyranoside, methyl beta-galactopyranoside, N-acetyllactosamine, p-nitrophenyl beta-D-galactopyranoside (pNP-Gal), p-nitrophenyl N-acetyl-beta-D-galactosaminide (pNP-GalNAc), asialofetuin, and human erythrocyte membrane lipids lactosyl ceramide (LacCer) and globoside globotetraosylceramide (Gb4Cer). Binds moderately to galactose, melibiose, raffinose, fucose, methyl alpha-galactoside and methyl beta-galactoside. Binds weakly to glucose, mannose and N-acetylglucosamine (GlcNAc). Has hemolytic activity towards human (A, B and O-type), rabbit and rat erythrocytes, but not towards mouse, chicken or horse erythrocytes. Forms ion-permeable transmembrane pores in the erythrocyte membrane as well as in artificial liposomes containing human erythrocyte membrane lipids LacCer, Gb4Cer and galactosyl ceramide (GalCer) leading to destruction of the membrane. Has hemagglutinating activity towards rabbit, human and rat erythrocytes, and at relatively high concentrations towards chicken and horse erythrocytes, but not towards mouse erythrocytes. Has dose-dependent cytotoxic effect on Madin-Darby canine kidney (MDCK), African green monkey kidney (Vero) and human epithelia carcinoma (HeLa) cell lines, but Chinese hamster ovary (CHO), rat sarcoma (XC) and potoroo rat kangaroo kidney (PtK1) cells are highly resistant to the cytotoxic effect of this protein. Impairs malaria parasite development in malaria parasite infected transgenic A.stephensi mosquitoes expressing this protein specifically in their midguts. Binds to ookinetes and leads to strong dose-dependent inhibition of ookinete formation in vitro. Leads to severely impaired oocyst formation and significantly reduced sporozoite production of rodent malaria parasite P.berghei in the salivary glands of the transgenic mosquitoes. The parasite transmission to uninfected mice (vectorial competence) of these mosquitoes is significantly impaired. Also leads to severely impaired oocyst formation of human malaria parasite P.falciparum in transgenic mosquitoes fed on mature P.falciparum gametocyte cultures. May be involved in defense mechanisms acting as a toxic protein to foreign microorganisms. May act in defense against predators. This Pseudocnus echinatus (Sea cucumber) protein is Galactose/N-acetylgalactosamine-binding lectin CEL-III.